The sequence spans 440 residues: Chorismate synthase 1, chloroplastic (440 aa).

Residues M1 to A54 constitute a chloroplast transit peptide. The disordered stretch occupies residues R100–D147. Polar residues predominate over residues C118 to S132.

Belongs to the chorismate synthase family. In terms of assembly, homotetramer. FMNH2 serves as cofactor. As to expression, predominantly expressed in flowers and roots and, to a lesser extent, in stems, leaves, and cotyledons.

The protein localises to the plastid. Its subcellular location is the chloroplast. The catalysed reaction is 5-O-(1-carboxyvinyl)-3-phosphoshikimate = chorismate + phosphate. It functions in the pathway metabolic intermediate biosynthesis; chorismate biosynthesis; chorismate from D-erythrose 4-phosphate and phosphoenolpyruvate: step 7/7. Its function is as follows. Catalyzes the last common step of the biosynthesis of aromatic amino acids, produced via the shikimic acid pathway. This is Chorismate synthase 1, chloroplastic (CS1) from Solanum lycopersicum (Tomato).